The following is a 327-amino-acid chain: MAAVVEVEVGGGAAGERELDEVDMSDLSPEEQWRVEHARMHAKHRGHEAMHAEMVLILIATLVVAQLLLVQWKQRHPRSYNMVTLFQMWVVPLYFTVKLHWWRFLVIWILFSAVTAFVTFRATRKPLVQTTPRLVYKWFLLIYKISYATGIVGYMAVMFTLFGLNLLFKIKPEDAMDFGISLLFYGLYYGVLERDFAEMCADYMASTIGFYSESGMPTKHLSDSVCAVCGQQIFVDVSEEGIIENTYRLSCNHVFHEFCIRGWCIVGKKQTCPYCKEKVDLKRMFSNPWERPHVMYGQLLDWLRYLVAWQPVIIGVVQGINYILGLE.

An N-acetylalanine modification is found at Ala2. 5 consecutive transmembrane segments (helical) span residues 50-70 (MHAE…LLLV), 79-99 (SYNM…TVKL), 100-120 (HWWR…FVTF), 148-168 (ATGI…NLLF), and 172-192 (PEDA…YGVL). The segment at 226 to 276 (CAVCGQQIFVDVSEEGIIENTYRLSCNHVFHEFCIRGWCIVGKKQTCPYCK) adopts an RING-type; atypical zinc-finger fold. Residues 306 to 326 (LVAWQPVIIGVVQGINYILGL) traverse the membrane as a helical segment.

It belongs to the RNF121 family.

The protein localises to the endoplasmic reticulum membrane. The enzyme catalyses S-ubiquitinyl-[E2 ubiquitin-conjugating enzyme]-L-cysteine + [acceptor protein]-L-lysine = [E2 ubiquitin-conjugating enzyme]-L-cysteine + N(6)-ubiquitinyl-[acceptor protein]-L-lysine.. The protein operates within protein modification; protein ubiquitination. Its function is as follows. E3 ubiquitin ligase which accepts ubiquitin and transfers it to substrates thereby promoting their degradation by the endoplasmic reticulum-associated degradation (ERAD) pathway which is a pathway involved in ubiquitin-dependent degradation of misfolded endoplasmic reticulum proteins. May regulate the unfolded protein response to reduce endoplasmic reticulum stress. In Homo sapiens (Human), this protein is E3 ubiquitin ligase RNF121 (RNF121).